Consider the following 112-residue polypeptide: Na(+)/H(+) antiporter subunit C (112 aa).

3 helical membrane passes run 4-21 (LMSI…YLIL), 28-50 (VVVG…AGLQ), and 70-92 (QALI…VLAY).

It belongs to the CPA3 antiporters (TC 2.A.63) subunit C family. In terms of assembly, forms a heterooligomeric complex that consists of seven subunits: MrpA, MrpB, MrpC, MrpD, MrpE, MrpF and MrpG.

The protein resides in the cell membrane. Functionally, mnh complex is a Na(+)Li(+)/H(+) antiporter involved in Na(+) and/or Li(+) excretion and Na(+) resistance. Na(+)/H(+) antiport consumes a transmembrane electrical potential, and is thus inferred to be electrogenic. Does not transport K(+), Ca(2+) or Mg(2+). The polypeptide is Na(+)/H(+) antiporter subunit C (mrpC) (Alkalihalophilus pseudofirmus (strain ATCC BAA-2126 / JCM 17055 / OF4) (Bacillus pseudofirmus)).